The sequence spans 370 residues: sn-glycerol-3-phosphate import ATP-binding protein UgpC (370 aa).

Positions 4–235 constitute an ABC transporter domain; sequence LRLDGIRKRY…PATRFVASFL (232 aa). 37–44 lines the ATP pocket; the sequence is GPSGCGKS.

The protein belongs to the ABC transporter superfamily. sn-glycerol-3-phosphate importer (TC 3.A.1.1.3) family. The complex is composed of two ATP-binding proteins (UgpC), two transmembrane proteins (UgpA and UgpE) and a solute-binding protein (UgpB).

The protein localises to the cell inner membrane. The catalysed reaction is sn-glycerol 3-phosphate(out) + ATP + H2O = sn-glycerol 3-phosphate(in) + ADP + phosphate + H(+). Part of the ABC transporter complex UgpBAEC involved in sn-glycerol-3-phosphate (G3P) import. Responsible for energy coupling to the transport system. In Chromohalobacter salexigens (strain ATCC BAA-138 / DSM 3043 / CIP 106854 / NCIMB 13768 / 1H11), this protein is sn-glycerol-3-phosphate import ATP-binding protein UgpC.